Reading from the N-terminus, the 512-residue chain is Centrosomal protein CCDC61 (512 aa).

At Met-1 the chain carries N-acetylmethionine. Residues 1 to 142 form a head domain region; that stretch reads MEQPAGLQVD…PLPLPYQGKP (142 aa). 2 coiled-coil regions span residues 176–203 and 246–273; these read WHLR…REEA and RRLA…NCEL. Thr-282 is subject to Phosphothreonine. Disordered regions lie at residues 282–415 and 430–472; these read TLPA…SFRS and SQSV…HLAS. The span at 287–300 shows a compositional bias: basic and acidic residues; that stretch reads AREDRALSSRERST. A phosphoserine mark is found at Ser-328, Ser-330, Ser-372, and Ser-375. The segment covering 406-415 has biased composition (low complexity); it reads RSSSVDSFRS. 2 positions are modified to phosphoserine: Ser-447 and Ser-473.

This sequence belongs to the CCDC61 family. In terms of assembly, forms homodimers (via head domain). Interacts with CEP170. Interacts with PCM1 and CEP131. Binds tubulin.

The protein localises to the cytoplasm. It localises to the cytoskeleton. It is found in the microtubule organizing center. The protein resides in the centrosome. Its subcellular location is the centriolar satellite. The protein localises to the cilium basal body. In terms of biological role, microtubule-binding centrosomal protein required for centriole cohesion, independently of the centrosome-associated protein/CEP250 and rootletin/CROCC linker. In interphase, required for anchoring microtubule at the mother centriole subdistal appendages and for centrosome positioning. During mitosis, may be involved in spindle assembly and chromatin alignment by regulating the organization of spindle microtubules into a symmetrical structure. Plays a non-essential role in ciliogenesis. The chain is Centrosomal protein CCDC61 from Rattus norvegicus (Rat).